The sequence spans 153 residues: Putative phosphatidylglycerol/phosphatidylinositol transfer protein DDB_G0285639 (153 aa).

A signal peptide spans 1 to 21 (MIIKILLLIISISLFLNISIG). N-linked (GlcNAc...) asparagine glycans are attached at residues Asn17, Asn61, Asn87, Asn117, and Asn140.

This sequence belongs to the NPC2 family. As to quaternary structure, monomer.

In terms of biological role, catalyzes the intermembrane transfer of phosphatidylglycerol and phosphatidylinositol. The protein is Putative phosphatidylglycerol/phosphatidylinositol transfer protein DDB_G0285639 of Dictyostelium discoideum (Social amoeba).